We begin with the raw amino-acid sequence, 298 residues long: MTDLHTDVERYLRYLSVERQLSPITLLNYQRQLEAIINFASENGLQSWQQCDVTMVRNFAVRSRRKGLGAASLALRLSALRSFFDWLVSQNELKANPAKGVSAPKAPRHLPKNIDVDDMNRLLDIDINDPLAVRDRAMLEVMYGAGLRLSELVGLDIKHLDLESGEVWVMGKGSKERRLPIGRNAVAWIEHWLDLRDLFGSEDDALFLSKLGKRISARNVQKRFAEWGIKQGLNNHVHPHKLRHSFATHMLESSGDLRGVQELLGHANLSTTQIYTHLDFQHLASVYDAAHPRAKRGK.

The 87-residue stretch at 2–88 (TDLHTDVERY…ALRSFFDWLV (87 aa)) folds into the Core-binding (CB) domain. Residues 109-288 (HLPKNIDVDD…DFQHLASVYD (180 aa)) form the Tyr recombinase domain. Residues arginine 148, lysine 172, histidine 240, arginine 243, and histidine 266 contribute to the active site. Tyrosine 275 functions as the O-(3'-phospho-DNA)-tyrosine intermediate in the catalytic mechanism.

It belongs to the 'phage' integrase family. XerC subfamily. In terms of assembly, forms a cyclic heterotetrameric complex composed of two molecules of XerC and two molecules of XerD, in which XerC interacts with XerD via its C-terminal region, XerD interacts with XerC via its C-terminal region and so on.

The protein localises to the cytoplasm. With respect to regulation, ftsK may regulate the catalytic switch between XerC and XerD in the heterotetrameric complex during the two steps of the recombination process. Site-specific tyrosine recombinase, which acts by catalyzing the cutting and rejoining of the recombining DNA molecules. Binds cooperatively to specific DNA consensus sequences that are separated from XerD binding sites by a short central region, forming the heterotetrameric XerC-XerD complex that recombines DNA substrates. The complex is essential to convert dimers of the bacterial chromosome into monomers to permit their segregation at cell division. It also contributes to the segregational stability of plasmids. In the complex XerC specifically exchanges the top DNA strands. The sequence is that of Tyrosine recombinase XerC from Escherichia coli (strain 55989 / EAEC).